Reading from the N-terminus, the 287-residue chain is MGIRNYRPYTPGTRQKSVSDFSEITHDQPEKSLTSFRHRAKGRNNRGVITSRRRGGGHKRLYREIDFRRNKLSVPGTVLTVEYDPNRNARISLVQYEDGEKRYILHPRNLAVGAVIAAGPDAAIEVGNALPLSKIPLGTGVHNVEITPGRGGQMVRAAGAMAQVVAKEGDMVTLKLPSGEVRLFRKECYATIGQIGNVDVNNISIGKAGRNRWKGRRPKVRGSVMNPVDHPHGGGEGRAPIGRSGPVTPWGKPTLGYKTRKKKKLSNALIVRRRRKSSKRGRGGRQS.

Disordered stretches follow at residues 1-30 (MGIR…DQPE) and 211-287 (NRWK…GRQS). Residues 12-22 (GTRQKSVSDFS) show a composition bias toward polar residues. Composition is skewed to basic residues over residues 211–220 (NRWKGRRPKV) and 258–287 (KTRK…GRQS).

This sequence belongs to the universal ribosomal protein uL2 family. As to quaternary structure, part of the 50S ribosomal subunit. Forms a bridge to the 30S subunit in the 70S ribosome.

One of the primary rRNA binding proteins. Required for association of the 30S and 50S subunits to form the 70S ribosome, for tRNA binding and peptide bond formation. It has been suggested to have peptidyltransferase activity; this is somewhat controversial. Makes several contacts with the 16S rRNA in the 70S ribosome. This Cyanothece sp. (strain PCC 7425 / ATCC 29141) protein is Large ribosomal subunit protein uL2.